Reading from the N-terminus, the 291-residue chain is 33 kDa chaperonin (291 aa).

Intrachain disulfides connect Cys-237-Cys-239 and Cys-270-Cys-273.

The protein belongs to the HSP33 family. In terms of processing, under oxidizing conditions two disulfide bonds are formed involving the reactive cysteines. Under reducing conditions zinc is bound to the reactive cysteines and the protein is inactive.

It localises to the cytoplasm. Its function is as follows. Redox regulated molecular chaperone. Protects both thermally unfolding and oxidatively damaged proteins from irreversible aggregation. Plays an important role in the bacterial defense system toward oxidative stress. The protein is 33 kDa chaperonin of Bacillus mycoides (strain KBAB4) (Bacillus weihenstephanensis).